Consider the following 78-residue polypeptide: Defensin-like protein 201 (78 aa).

The first 22 residues, 1–22, serve as a signal peptide directing secretion; the sequence is MRNLINFAVLIMTIFIVSASGA. Cystine bridges form between cysteine 32–cysteine 78, cysteine 41–cysteine 61, cysteine 46–cysteine 71, and cysteine 50–cysteine 73.

It belongs to the DEFL family.

Its subcellular location is the secreted. This chain is Defensin-like protein 201, found in Arabidopsis thaliana (Mouse-ear cress).